A 346-amino-acid polypeptide reads, in one-letter code: UPF0324 membrane protein FN0533 (346 aa).

10 helical membrane passes run 5–22, 27–49, 62–81, 86–108, 115–137, 147–169, 216–233, 248–270, 283–305, and 315–337; these read LYGIILCFLLALPAWKLG, LVGGPVFGIIIGIVIAILLKNRA, VLQYAVILLGFGLNLQTIIS, SLPIIVSTISTSLIIAYILAKLI, VILIGVGSSICGGSAIAATAPVI, AISVIFLFNVIAALIFPTLGDIL, LTRTLAIIPITLFLAVYN, IFPMFIVYFILASIITTVCNYFI, INNVFSFFKHLSKFFIIMAMVAI, and ILSGAKPLTLGFCCWFAISLVSI.

The protein belongs to the UPF0324 family.

It localises to the cell membrane. The polypeptide is UPF0324 membrane protein FN0533 (Fusobacterium nucleatum subsp. nucleatum (strain ATCC 25586 / DSM 15643 / BCRC 10681 / CIP 101130 / JCM 8532 / KCTC 2640 / LMG 13131 / VPI 4355)).